Consider the following 124-residue polypeptide: Conotoxin Im14.2 (124 aa).

A signal peptide spans 1 to 20; the sequence is MARFLSILLCFAMATGLAAG. A propeptide spanning residues 21–99 is cleaved from the precursor; sequence IRYPDRVLGR…AENPVRDPKK (79 aa).

Contain 2 disulfide bonds. As to expression, expressed by the venom duct.

Its subcellular location is the secreted. In terms of biological role, probable neurotoxin. The protein is Conotoxin Im14.2 of Conus imperialis (Imperial cone).